The following is a 306-amino-acid chain: Ribonuclease H2 subunit B (306 aa).

Positions 232 to 285 (LPDLSSPTPEPPVKKRRVSDAPVEADEDYTKYNSDNKSRKSNSKMTAAQKSLAK) are disordered. Residues 259–269 (DYTKYNSDNKS) show a composition bias toward basic and acidic residues.

It belongs to the RNase H2 subunit B family. In terms of assembly, the RNase H2 complex is a heterotrimer composed of the catalytic subunit RNASEH2A and the non-catalytic subunits RNASEH2B and RNASEH2C.

The protein resides in the nucleus. Its function is as follows. Non catalytic subunit of RNase H2, an endonuclease that specifically degrades the RNA of RNA:DNA hybrids. Participates in DNA replication, possibly by mediating the removal of lagging-strand Okazaki fragment RNA primers during DNA replication. Mediates the excision of single ribonucleotides from DNA:RNA duplexes. In Xenopus laevis (African clawed frog), this protein is Ribonuclease H2 subunit B (rnaseh2b).